Reading from the N-terminus, the 151-residue chain is Transcriptional regulator MraZ (151 aa).

2 consecutive SpoVT-AbrB domains span residues 5–52 and 81–124; these read ANAI…PLDE and AVDL…DEDA.

Belongs to the MraZ family. In terms of assembly, forms oligomers.

It localises to the cytoplasm. Its subcellular location is the nucleoid. The sequence is that of Transcriptional regulator MraZ from Pseudomonas fluorescens (strain SBW25).